Reading from the N-terminus, the 322-residue chain is tRNA dimethylallyltransferase (322 aa).

19 to 26 contributes to the ATP binding site; the sequence is GPTASGKT. 21 to 26 is a substrate binding site; it reads TASGKT. Interaction with substrate tRNA stretches follow at residues 44 to 47, 168 to 172, and 255 to 260; these read DSAL, QRIQR, and RCVGYR.

This sequence belongs to the IPP transferase family. Monomer. Mg(2+) serves as cofactor.

It carries out the reaction adenosine(37) in tRNA + dimethylallyl diphosphate = N(6)-dimethylallyladenosine(37) in tRNA + diphosphate. Its function is as follows. Catalyzes the transfer of a dimethylallyl group onto the adenine at position 37 in tRNAs that read codons beginning with uridine, leading to the formation of N6-(dimethylallyl)adenosine (i(6)A). This is tRNA dimethylallyltransferase from Cupriavidus taiwanensis (strain DSM 17343 / BCRC 17206 / CCUG 44338 / CIP 107171 / LMG 19424 / R1) (Ralstonia taiwanensis (strain LMG 19424)).